The sequence spans 130 residues: Classical arabinogalactan protein 7 (130 aa).

The first 21 residues, 1-21 (MNSKIIEAFFIVALFTTSCLA), serve as a signal peptide directing secretion. Residue Gln22 is modified to Pyrrolidone carboxylic acid. The interval 22-108 (QAPAPSPTTT…DASAPPPNAA (87 aa)) is disordered. Pro24, Pro26, Pro28, Pro35, and Pro36 each carry 4-hydroxyproline. O-linked (Ara...) hydroxyproline glycosylation is found at Pro24, Pro26, Pro28, Pro35, and Pro36. Positions 33–68 (TPPPVATPPPAATPAPTTTPPPAVSPAPTSSPPSSA) are enriched in pro residues. Asn106 carries the GPI-anchor amidated asparagine lipid modification. The propeptide at 107-130 (AALTNKAFVVGSLVAAIIYAVVLA) is removed in mature form.

It belongs to the classical AGP family. In terms of processing, O-glycosylated on hydroxyprolines; noncontiguous hydroxylproline residues are glycosylated with arabinogalactan.

The protein localises to the cell membrane. In terms of biological role, proteoglycan that seems to be implicated in diverse developmental roles such as differentiation, cell-cell recognition, embryogenesis and programmed cell death. This is Classical arabinogalactan protein 7 (AGP7) from Arabidopsis thaliana (Mouse-ear cress).